The chain runs to 434 residues: Glucose-1-phosphate adenylyltransferase (434 aa).

Residues tyrosine 112, glycine 178, glutamate 193–lysine 194, and serine 211 each bind alpha-D-glucose 1-phosphate.

The protein belongs to the bacterial/plant glucose-1-phosphate adenylyltransferase family. In terms of assembly, homotetramer.

It catalyses the reaction alpha-D-glucose 1-phosphate + ATP + H(+) = ADP-alpha-D-glucose + diphosphate. Its pathway is glycan biosynthesis; glycogen biosynthesis. In terms of biological role, involved in the biosynthesis of ADP-glucose, a building block required for the elongation reactions to produce glycogen. Catalyzes the reaction between ATP and alpha-D-glucose 1-phosphate (G1P) to produce pyrophosphate and ADP-Glc. The sequence is that of Glucose-1-phosphate adenylyltransferase from Mannheimia succiniciproducens (strain KCTC 0769BP / MBEL55E).